The chain runs to 598 residues: Probable translation initiation factor IF-2 (598 aa).

The tr-type G domain occupies leucine 3–lysine 225. Residues glycine 12–threonine 19 form a G1 region. Position 12–19 (glycine 12–threonine 19) interacts with GTP. The interval glycine 37–histidine 41 is G2. Positions aspartate 76–glycine 79 are G3. GTP-binding positions include aspartate 76–histidine 80 and asparagine 130–aspartate 133. The segment at asparagine 130–aspartate 133 is G4. The segment at serine 200–methionine 202 is G5.

It belongs to the TRAFAC class translation factor GTPase superfamily. Classic translation factor GTPase family. IF-2 subfamily.

In terms of biological role, function in general translation initiation by promoting the binding of the formylmethionine-tRNA to ribosomes. Seems to function along with eIF-2. The sequence is that of Probable translation initiation factor IF-2 from Methanococcus maripaludis (strain C5 / ATCC BAA-1333).